The following is a 650-amino-acid chain: MAFIWRRRSTTIVKLVAFALAIWFCIAFLVYTDDTRRRAAQEGAGASGAGSAPGVGGGAGGLGDPIALALRNEPAGEDFGINGNVIGGGGQKQAHDEADIPPTVGKHKADLQAERMRKKAAEQPKKKPQEDSKKVIDPPANFEENPGELGKPVRLPKEMSDEMKKAVDDGWTKNAFNQYVSDLISVHRTLPDPRDAWCKDEARYLTNLPKTDVIICFHNEAWTVLLRTVHSVLDRSPEHLIGKIILVDDYSDMPHLKRQLEDYFAAYPKVQIIRGQKREGLIRARILGANHAKSPVLTYLDSHCECTEGWLEPLLDRIARNSTTVVCPVIDVISDETLEYHYRDSGGVNVGGFDWNLQFSWHPVPERERKRHNSTAEPVYSPTMAGGLFSIDREFFDRLGTYDSGFDIWGGENLELSFKTWMCGGTLEIVPCSHVGHIFRKRSPYKWRSGVNVLKKNSVRLAEVWMDEYSQYYYHRIGNDKGDWGDVSDRRKLRNDLKCKSFKWYLDNIYPELFIPGDSVAHGEIRNLGYGGRTCLDAPAGKKHQKKAVGTYPCHRQGGNQYWMLSKAGEIRRDDSCLDYAGKDVTLFGCHGGKGNQFWTYRENTKQLHHGTSGKCLAISESKDKLLMEECSASLSRQQWTLENYDSSKL.

The Cytoplasmic portion of the chain corresponds to 1–11; that stretch reads MAFIWRRRSTT. A helical; Signal-anchor for type II membrane protein membrane pass occupies residues 12 to 31; that stretch reads IVKLVAFALAIWFCIAFLVY. The Lumenal portion of the chain corresponds to 32-650; the sequence is TDDTRRRAAQ…TLENYDSSKL (619 aa). A disordered region spans residues 84–154; sequence NVIGGGGQKQ…NPGELGKPVR (71 aa). The span at 107 to 136 shows a compositional bias: basic and acidic residues; sequence HKADLQAERMRKKAAEQPKKKPQEDSKKVI. Cystine bridges form between Cys198–Cys432, Cys423–Cys499, Cys535–Cys554, Cys577–Cys590, and Cys616–Cys631. The interval 208–317 is catalytic subdomain A; that stretch reads LPKTDVIICF…EGWLEPLLDR (110 aa). Substrate contacts are provided by Cys216, Asp249, and Arg278. Position 301 (Asp301) interacts with Mn(2+). Substrate contacts are provided by Ser302 and His303. His303 is a Mn(2+) binding site. N-linked (GlcNAc...) asparagine glycans are attached at residues Asn321 and Asn373. The interval 378–440 is catalytic subdomain B; the sequence is PVYSPTMAGG…PCSHVGHIFR (63 aa). Residue His437 coordinates Mn(2+). Substrate-binding residues include Arg440 and Tyr445. One can recognise a Ricin B-type lectin domain in the interval 521-643; that stretch reads AHGEIRNLGY…SLSRQQWTLE (123 aa).

Belongs to the glycosyltransferase 2 family. GalNAc-T subfamily. As to quaternary structure, isoform A forms homotetramer. Isoform B forms homodimer. Requires Mn(2+) as cofactor.

It localises to the golgi apparatus membrane. It carries out the reaction L-seryl-[protein] + UDP-N-acetyl-alpha-D-galactosamine = a 3-O-[N-acetyl-alpha-D-galactosaminyl]-L-seryl-[protein] + UDP + H(+). The enzyme catalyses L-threonyl-[protein] + UDP-N-acetyl-alpha-D-galactosamine = a 3-O-[N-acetyl-alpha-D-galactosaminyl]-L-threonyl-[protein] + UDP + H(+). The protein operates within protein modification; protein glycosylation. Functionally, catalyzes the initial reaction in O-linked oligosaccharide biosynthesis, the transfer of an N-acetyl-D-galactosamine residue to a serine or threonine residue on the protein receptor. It can both act as a peptide transferase that transfers GalNAc onto unmodified peptide substrates, and as a glycopeptide transferase that requires the prior addition of a GalNAc on a peptide before adding additional GalNAc moieties. N-acetylgalactosaminyltransferase which preferentially O-glycosylates negatively charge substrates. O-glycosylates mucin-like protein Sgs3 in the salivary gland but to a lesser extent than isoform B. By regulating the O-glycosylation of secretory cargo proteins plays a role in the morphology and maturation of salivary gland secretory granules. Its function is as follows. N-acetylgalactosaminyltransferase which preferentially O-glycosylates positively charge substrates. O-glycosylates mucin-like protein Sgs3 in the salivary gland. By regulating the O-glycosylation of secretory cargo proteins, plays a role in the morphology and maturation of salivary gland secretory granules. This Drosophila melanogaster (Fruit fly) protein is Putative polypeptide N-acetylgalactosaminyltransferase 9.